Reading from the N-terminus, the 64-residue chain is Large ribosomal subunit protein bL28C (64 aa).

The protein belongs to the bacterial ribosomal protein bL28 family.

This chain is Large ribosomal subunit protein bL28C, found in Mycobacterium tuberculosis (strain ATCC 25618 / H37Rv).